The primary structure comprises 263 residues: 3-methyl-2-oxobutanoate hydroxymethyltransferase (263 aa).

Positions 43 and 82 each coordinate Mg(2+). Residues 43–44 (DS), Asp82, and Lys111 each bind 3-methyl-2-oxobutanoate. A Mg(2+)-binding site is contributed by Glu113. The active-site Proton acceptor is the Glu179.

This sequence belongs to the PanB family. Homodecamer; pentamer of dimers. Mg(2+) is required as a cofactor.

The protein localises to the cytoplasm. The catalysed reaction is 3-methyl-2-oxobutanoate + (6R)-5,10-methylene-5,6,7,8-tetrahydrofolate + H2O = 2-dehydropantoate + (6S)-5,6,7,8-tetrahydrofolate. It participates in cofactor biosynthesis; (R)-pantothenate biosynthesis; (R)-pantoate from 3-methyl-2-oxobutanoate: step 1/2. In terms of biological role, catalyzes the reversible reaction in which hydroxymethyl group from 5,10-methylenetetrahydrofolate is transferred onto alpha-ketoisovalerate to form ketopantoate. In Neisseria meningitidis serogroup A / serotype 4A (strain DSM 15465 / Z2491), this protein is 3-methyl-2-oxobutanoate hydroxymethyltransferase.